The primary structure comprises 66 residues: Toxin Os1 (66 aa).

Residues 2–66 (RDGYIVQLHN…PIKWLDPKCY (65 aa)) form the LCN-type CS-alpha/beta domain. 4 disulfide bridges follow: cysteine 12-cysteine 65, cysteine 16-cysteine 37, cysteine 22-cysteine 47, and cysteine 26-cysteine 49.

This sequence belongs to the long (4 C-C) scorpion toxin superfamily. Sodium channel inhibitor family. Alpha subfamily. As to expression, expressed by the venom gland.

Its subcellular location is the secreted. Functionally, alpha toxins bind voltage-independently at site-3 of sodium channels (Nav) and inhibit the inactivation of the activated channels, thereby blocking neuronal transmission. This toxin possesses a high paralytic activity against mice. In Orthochirus scrobiculosus (Central Asian scorpion), this protein is Toxin Os1.